The sequence spans 288 residues: Elongation factor Ts (288 aa).

Residues 80 to 83 form an involved in Mg(2+) ion dislocation from EF-Tu region; that stretch reads TDFV.

The protein belongs to the EF-Ts family.

The protein resides in the cytoplasm. Associates with the EF-Tu.GDP complex and induces the exchange of GDP to GTP. It remains bound to the aminoacyl-tRNA.EF-Tu.GTP complex up to the GTP hydrolysis stage on the ribosome. The chain is Elongation factor Ts from Chromobacterium violaceum (strain ATCC 12472 / DSM 30191 / JCM 1249 / CCUG 213 / NBRC 12614 / NCIMB 9131 / NCTC 9757 / MK).